We begin with the raw amino-acid sequence, 528 residues long: Pentatricopeptide repeat-containing protein At1g62914, mitochondrial (528 aa).

The transit peptide at 1–20 (MLAKISSSAKRFVHRSLVVR) directs the protein to the mitochondrion. 13 PPR repeats span residues 77-111 (SIIEFSKLLSAIAKMNKFDLVISFGEKMEILGISH), 112-146 (NLYTYNILINCFCRCSRLSLALALLGKMMKLGYEP), 147-181 (DIVTLNSLLNGFCHGNRISDAVALVDQMVEMGYKP), 182-216 (DTVTFTTLIHGLFLHNKASEAVALIDRMVQRGCQP), 217-251 (DLVTYGAVVNGLCKRGDTDLALNLLNKMEAAKIEA), 252-286 (NVVIYSTVIDSLCKYRHEDDALNLFTEMENKGVRP), 287-321 (NVITYSSLISCLCNYGRWSDASRLLSDMIERKINP), 322-356 (NLVTFSALIDAFVKKGKLVKAEKLYEEMIKRSIDP), 357-391 (NIFTYSSLINGFCMLDRLGEAKQMLELMIRKDCLP), 392-426 (NVVTYNTLINGFCKAKRVDKGMELFREMSQRGLVG), 427-461 (NTVTYTTLIHGFFQARDCDNAQMVFKQMVSVGVHP), 462-496 (NILTYNILLDGLCKNGKLAKAMVVFEYLQRSTMEP), and 497-528 (DIYTYNIMIEGMCKAGKWKMGGIYFVASALKE).

The protein belongs to the PPR family. P subfamily.

The protein localises to the mitochondrion. The polypeptide is Pentatricopeptide repeat-containing protein At1g62914, mitochondrial (Arabidopsis thaliana (Mouse-ear cress)).